The following is a 239-amino-acid chain: Ribonuclease PH (239 aa).

Residues R87 and 125–127 (GTR) contribute to the phosphate site.

Belongs to the RNase PH family. Homohexameric ring arranged as a trimer of dimers.

It catalyses the reaction tRNA(n+1) + phosphate = tRNA(n) + a ribonucleoside 5'-diphosphate. In terms of biological role, phosphorolytic 3'-5' exoribonuclease that plays an important role in tRNA 3'-end maturation. Removes nucleotide residues following the 3'-CCA terminus of tRNAs; can also add nucleotides to the ends of RNA molecules by using nucleoside diphosphates as substrates, but this may not be physiologically important. Probably plays a role in initiation of 16S rRNA degradation (leading to ribosome degradation) during starvation. The protein is Ribonuclease PH of Dehalococcoides mccartyi (strain ATCC BAA-2266 / KCTC 15142 / 195) (Dehalococcoides ethenogenes (strain 195)).